The chain runs to 699 residues: MDNNGGGSSGNEQYTSGDAKQNGKRTCHRHTPQQIQRLEAYFKECPHPDERQRNQLCRELKLEPDQIKFWFQNKRTQSKTQEDRSTNVLLRGENETLQSDNEAMLDALKSVLCPACGGPPFGREERGHNLQKLRFENARLKDHRDRISNFVDQHKPNEPTVEDSLAYVPSLDRISYGINGGNMYEPSSSYGPPNFQIIQPRPLAETDMSLLSEIAASAVEELKRLFLAEEQFWVKSCIDETYVIDTESYERFSHAVKHFSSTTAHVESSKAVTVVHVEAINLIQMFLDPEKWKELFPTIVNKANTIHVLGSGLPIRGNCNVLQVMWEQLHILSPLVPAREFMVVRCCQEIEKGIWIIADVSHRANFDFGNAACYKRPSGCLIQALPDAHSKVMWIEHVEVDHKLDTHKIYRDLLSGGSGYGAKRWIVTLERMCERMALSSIQTLPPSDRSEVITTGEARRSVMKLGERMVKNFNEMLTMSGKIDFPQQSKNGVRVSIRMNIEAGQPPGIVVSASSSLAIPLTPLQVFAFLQNLDTRQQWDILSYGTVVNEIARIVTGSSETNCVTILRVHPTHEENNDKMVVQDSCKDDMLMLQDCYMDALGGMIVYAPMDMATMHFAVSGEVDPSHIPILPSGFVISSDGRRSTVEDGGTLLTVAFQILVSGKANRSREVNEKSVDTVSALISSTIQRIKGLLNCPEC.

Positions 1–31 (MDNNGGGSSGNEQYTSGDAKQNGKRTCHRHT) are disordered. The span at 10 to 19 (GNEQYTSGDA) shows a compositional bias: polar residues. The segment covering 22 to 31 (NGKRTCHRHT) has biased composition (basic residues). Residues 23-82 (GKRTCHRHTPQQIQRLEAYFKECPHPDERQRNQLCRELKLEPDQIKFWFQNKRTQSKTQE) constitute a DNA-binding region (homeobox). Residues 89-149 (LLRGENETLQ…LKDHRDRISN (61 aa)) adopt a coiled-coil conformation. The START domain maps to 204–438 (AETDMSLLSE…LERMCERMAL (235 aa)).

This sequence belongs to the HD-ZIP homeobox family. Class IV subfamily. In terms of assembly, interacts with ANT. In terms of tissue distribution, expressed in the embryo at early stage and in the endosperm.

The protein localises to the nucleus. In terms of biological role, probable transcription factor. In Arabidopsis thaliana (Mouse-ear cress), this protein is Homeobox-leucine zipper protein HDG8.